Reading from the N-terminus, the 246-residue chain is Phosducin (246 aa).

The segment covering 1 to 14 has biased composition (acidic residues); it reads MEEAKSQSLEEDFE. Residues 1–70 form a disordered region; it reads MEEAKSQSLE…GKDSKERVSR (70 aa). Positions 1–244 constitute a Phosducin domain; the sequence is MEEAKSQSLE…LEHTKIEEED (244 aa). Basic and acidic residues predominate over residues 60 to 69; the sequence is NGKDSKERVS. S73 is subject to Phosphoserine; by PKA. Residues 111–246 form a thioredoxin fold region; it reads YGFVYELETG…HTKIEEEDVE (136 aa).

Belongs to the phosducin family. Forms a complex with the beta and gamma subunits of the GTP-binding protein, transducin. Interacts with CRX. Post-translationally, light-induced changes in cyclic nucleotide levels modulate the phosphorylation of this protein by cAMP kinase.

It localises to the cytoplasm. The protein resides in the cytosol. Its subcellular location is the nucleus. It is found in the cell projection. The protein localises to the cilium. It localises to the photoreceptor outer segment. The protein resides in the photoreceptor inner segment. May participate in the regulation of visual phototransduction or in the integration of photoreceptor metabolism. Inhibits the transcriptional activation activity of the cone-rod homeobox CRX. This chain is Phosducin (PDC), found in Homo sapiens (Human).